We begin with the raw amino-acid sequence, 697 residues long: CENP-A multicopy suppressor protein 2 (697 aa).

The GATA-type; atypical zinc-finger motif lies at 351–378 (CQNCGTIKTANWRNATYMNITLMLCNAC). The tract at residues 443–484 (PLNRLTSLDSTHSAPDPNHISKPSVVNQQKSRGGPRTAKLKN) is disordered. A compositionally biased stretch (polar residues) spans 445–455 (NRLTSLDSTHS).

As to quaternary structure, interacts with CENP-A.

The protein resides in the nucleus. It localises to the chromosome. It is found in the centromere. Functionally, required for proper chromosome segregation via regulation of CENP-A localization to the centromere. The chain is CENP-A multicopy suppressor protein 2 (ams2) from Schizosaccharomyces pombe (strain 972 / ATCC 24843) (Fission yeast).